Consider the following 274-residue polypeptide: MNPEHSPLGKATVYAAQYDASLLFPIPRAGAREQLGIAAALPFFGTDIWNAYELSWLNARGKPQLAVATFYVPAESPNIVESKSFKLYLGSFAQSKFDSVDAVRDVLKRDVSAACGASVSVQLVSPHDFGKLQMEELDGLSLDRLDLDTDVYEPDPSLLSAAADEAPVEETLVSDLLRSNCPVTGQPDWGSVQIHYVGPQIDHAGLLRYIISFRNHTGFHEQCVERIFLDILQACKPLKLAVYARYTRRGGLDINPFRTNYNQSMPDNARTARQ.

Residue 80–82 (VES) participates in substrate binding. NADPH is bound at residue 82-83 (SK). Cys-181 serves as the catalytic Thioimide intermediate. Asp-188 serves as the catalytic Proton donor. A substrate-binding site is contributed by 220 to 221 (HE). 249 to 250 (RG) provides a ligand contact to NADPH.

It belongs to the GTP cyclohydrolase I family. QueF type 2 subfamily. As to quaternary structure, homodimer.

The protein localises to the cytoplasm. It catalyses the reaction 7-aminomethyl-7-carbaguanine + 2 NADP(+) = 7-cyano-7-deazaguanine + 2 NADPH + 3 H(+). Its pathway is tRNA modification; tRNA-queuosine biosynthesis. Catalyzes the NADPH-dependent reduction of 7-cyano-7-deazaguanine (preQ0) to 7-aminomethyl-7-deazaguanine (preQ1). This is NADPH-dependent 7-cyano-7-deazaguanine reductase from Burkholderia vietnamiensis (strain G4 / LMG 22486) (Burkholderia cepacia (strain R1808)).